Here is a 482-residue protein sequence, read N- to C-terminus: Rho GTPase-activating protein 15 (482 aa).

Residues Ser51, Ser111, Ser205, Ser208, and Ser250 each carry the phosphoserine modification. One can recognise a PH domain in the interval 87–198 (MVEKEGYLQK…WFHAIKNAID (112 aa)). Residues 288 to 477 (SHLHTVCERE…FMLTEYDKIF (190 aa)) enclose the Rho-GAP domain.

The protein resides in the cytoplasm. The protein localises to the membrane. Its function is as follows. GTPase activator for the Rho-type GTPases by converting them to an inactive GDP-bound state. Has activity toward RAC1. Overexpression results in an increase in actin stress fibers and cell contraction. This is Rho GTPase-activating protein 15 (Arhgap15) from Rattus norvegicus (Rat).